The primary structure comprises 177 residues: Large ribosomal subunit protein uL6 (177 aa).

This sequence belongs to the universal ribosomal protein uL6 family. Part of the 50S ribosomal subunit.

In terms of biological role, this protein binds to the 23S rRNA, and is important in its secondary structure. It is located near the subunit interface in the base of the L7/L12 stalk, and near the tRNA binding site of the peptidyltransferase center. This Hahella chejuensis (strain KCTC 2396) protein is Large ribosomal subunit protein uL6.